A 798-amino-acid polypeptide reads, in one-letter code: Neuroligin-1 (798 aa).

A signal peptide spans 1 to 17; the sequence is MERIYLLLLLFLPRIRS. Residues 18–685 lie on the Extracellular side of the membrane; it reads YDVRSVTTSW…AAGSFTGKAL (668 aa). Cys-86 and Cys-125 are disulfide-bonded. Asn-164, Asn-292, and Asn-315 each carry an N-linked (GlcNAc...) asparagine glycan. Cysteines 288 and 307 form a disulfide. The tract at residues 636 to 676 is disordered; sequence ANLPFPPPPMPPSPPPELTTKPKPSESPTTLQTTTESEKAA. Residues 639-652 are compositionally biased toward pro residues; that stretch reads PFPPPPMPPSPPPE. A compositionally biased stretch (low complexity) spans 653–665; it reads LTTKPKPSESPTT. A helical transmembrane segment spans residues 686-706; that stretch reads GGVIFIGCGFLIMNVCLLIAV. Topologically, residues 707 to 798 are cytoplasmic; it reads RREWGKKRRN…QAPTLEEIQV (92 aa). Residues 731-765 form a disordered region; that stretch reads HGGGAEQYNSLNSPEPLLSASHKNSTSMRPAGISP.

The protein belongs to the type-B carboxylesterase/lipase family. In terms of assembly, interacts (via extracellular domain) with isoform b of madd-4; the interaction is required for the localization to postsynaptic domains. Interacts with unc-49.

It is found in the cell membrane. It localises to the synapse. In terms of biological role, probable neuronal cell surface protein thought to be involved in cell-cell-interactions by forming intercellular junctions through binding to beta-neurexins. Plays a role in the clustering of the GABA(A) receptor unc-49 at postsynaptic sites in neuromuscular junctions (NMJs) via the interaction with madd-4 and neurexin nrx-1 and is thereby required for normal GABAergic synaptic transmission. The protein is Neuroligin-1 (nlg-1) of Caenorhabditis elegans.